A 1144-amino-acid chain; its full sequence is TMV resistance protein N (1144 aa).

The region spanning 10 to 177 (WSYDVFLSFR…QIVDQISSKL (168 aa)) is the TIR domain. Residue E86 is part of the active site. The region spanning 172–447 (QISSKLCKIS…FLDIACFLRG (276 aa)) is the NB-ARC domain. 216–223 (GMGGVGKT) provides a ligand contact to ATP. 6 LRR repeats span residues 597-618 (MLVH…TKHL), 620-642 (SLRR…TGMP), 643-665 (NLEY…LGCC), 834-854 (SLEY…PEEI), 859-880 (SLKK…IAQL), and 882-904 (ALQS…PPEL).

The protein belongs to the disease resistance NB-LRR family.

It localises to the cytoplasm. The catalysed reaction is NAD(+) + H2O = ADP-D-ribose + nicotinamide + H(+). Functionally, disease resistance protein. Resistance proteins guard the plant against pathogens that contain an appropriate avirulence protein via a direct or indirect interaction with this avirulence protein. That triggers a defense system including the hypersensitive response, which restricts the pathogen growth. The polypeptide is TMV resistance protein N (N) (Nicotiana glutinosa (Tobacco)).